An 87-amino-acid polypeptide reads, in one-letter code: DNA-directed RNA polymerase subunit omega (87 aa).

It belongs to the RNA polymerase subunit omega family. The RNAP catalytic core consists of 2 alpha, 1 beta, 1 beta' and 1 omega subunit. When a sigma factor is associated with the core the holoenzyme is formed, which can initiate transcription.

The enzyme catalyses RNA(n) + a ribonucleoside 5'-triphosphate = RNA(n+1) + diphosphate. Promotes RNA polymerase assembly. Latches the N- and C-terminal regions of the beta' subunit thereby facilitating its interaction with the beta and alpha subunits. The polypeptide is DNA-directed RNA polymerase subunit omega (Pseudomonas putida (strain W619)).